A 197-amino-acid chain; its full sequence is Xanthine phosphoribosyltransferase (197 aa).

Xanthine is bound by residues leucine 20 and asparagine 27. 128–132 provides a ligand contact to 5-phospho-alpha-D-ribose 1-diphosphate; the sequence is ANGQA. Lysine 156 is a xanthine binding site.

The protein belongs to the purine/pyrimidine phosphoribosyltransferase family. Xpt subfamily. Homodimer.

The protein localises to the cytoplasm. The catalysed reaction is XMP + diphosphate = xanthine + 5-phospho-alpha-D-ribose 1-diphosphate. It participates in purine metabolism; XMP biosynthesis via salvage pathway; XMP from xanthine: step 1/1. Converts the preformed base xanthine, a product of nucleic acid breakdown, to xanthosine 5'-monophosphate (XMP), so it can be reused for RNA or DNA synthesis. The chain is Xanthine phosphoribosyltransferase from Bacillus cereus (strain G9842).